Consider the following 98-residue polypeptide: Integration host factor subunit alpha (98 aa).

The segment at 49–70 is disordered; that stretch reads FGNFDLRDKNQRPGRNPKTGED.

The protein belongs to the bacterial histone-like protein family. In terms of assembly, heterodimer of an alpha and a beta chain.

In terms of biological role, this protein is one of the two subunits of integration host factor, a specific DNA-binding protein that functions in genetic recombination as well as in transcriptional and translational control. In Shewanella baltica (strain OS223), this protein is Integration host factor subunit alpha.